The following is a 362-amino-acid chain: Probable endopolygalacturonase II (362 aa).

Residues 1–20 (MHSFASLLAYGLAAGATLAS) form the signal peptide. A propeptide spanning residues 21–27 (ASPIEAR) is cleaved from the precursor. An intrachain disulfide couples cysteine 30 to cysteine 45. A PbH1 1 repeat occupies 156–186 (SDDITLTDITINNADGDSLGGHNTDAFDVGN). The Proton donor role is filled by aspartate 201. Cysteine 203 and cysteine 219 form a disulfide bridge. PbH1 repeat units lie at residues 209 to 229 (GENI…SIGS), 238 to 259 (VKNV…RIKT), 267 to 289 (VSEI…VIQQ), and 301 to 322 (TNGV…DSKA). Histidine 223 is an active-site residue. The N-linked (GlcNAc...) asparagine glycan is linked to asparagine 240. Intrachain disulfides connect cysteine 329–cysteine 334 and cysteine 353–cysteine 362.

Belongs to the glycosyl hydrolase 28 family.

Its subcellular location is the secreted. It carries out the reaction (1,4-alpha-D-galacturonosyl)n+m + H2O = (1,4-alpha-D-galacturonosyl)n + (1,4-alpha-D-galacturonosyl)m.. Functionally, involved in maceration and soft-rotting of plant tissue. Hydrolyzes the 1,4-alpha glycosidic bonds of de-esterified pectate in the smooth region of the plant cell wall. This Aspergillus kawachii (strain NBRC 4308) (White koji mold) protein is Probable endopolygalacturonase II (pgaII).